The primary structure comprises 88 residues: Putative regulatory protein PCC7424_3427 (88 aa).

This sequence belongs to the RemA family.

The sequence is that of Putative regulatory protein PCC7424_3427 from Gloeothece citriformis (strain PCC 7424) (Cyanothece sp. (strain PCC 7424)).